We begin with the raw amino-acid sequence, 500 residues long: Glutathione reductase (500 aa).

FAD is bound by residues S12 and G13. S12 is a binding site for glutathione. A glutathione-binding site is contributed by R19. Positions 32, 39, 40, and 48 each coordinate FAD. C40 and C45 are disulfide-bonded. Y95 provides a ligand contact to glutathione. A111 provides a ligand contact to FAD. NADP(+) contacts are provided by I187, E190, R207, R213, and G272. FAD contacts are provided by D312 and T354. A glutathione-binding site is contributed by R362. V384 is an NADP(+) binding site. Residue H485 participates in FAD binding. The active-site Proton acceptor is H485.

This sequence belongs to the class-I pyridine nucleotide-disulfide oxidoreductase family. As to quaternary structure, homodimer. FAD serves as cofactor.

It localises to the cytoplasm. It carries out the reaction 2 glutathione + NADP(+) = glutathione disulfide + NADPH + H(+). Functionally, catalyzes the reduction of glutathione disulfide (GSSG) to reduced glutathione (GSH). Constitutes the major mechanism to maintain a high GSH:GSSG ratio in the cytosol. The sequence is that of Glutathione reductase from Plasmodium falciparum (isolate K1 / Thailand).